A 142-amino-acid polypeptide reads, in one-letter code: Large ribosomal subunit protein uL13 (142 aa).

Belongs to the universal ribosomal protein uL13 family. Part of the 50S ribosomal subunit.

Functionally, this protein is one of the early assembly proteins of the 50S ribosomal subunit, although it is not seen to bind rRNA by itself. It is important during the early stages of 50S assembly. This chain is Large ribosomal subunit protein uL13, found in Francisella philomiragia subsp. philomiragia (strain ATCC 25017 / CCUG 19701 / FSC 153 / O#319-036).